Here is a 366-residue protein sequence, read N- to C-terminus: ACP-SH:acetate ligase (366 aa).

It localises to the cytoplasm. The enzyme catalyses holo-[ACP] + acetate + ATP = acetyl-[ACP] + AMP + diphosphate. Acyl-carrier protein (ACP) acetate ligase of the biotin-dependent malonate decarboxylase multienzyme complex (EC 7.2.4.4). Involved in the conversion of the thiol group of the ACP-bound 2'-(5-phosphoribosyl)-3'-dephospho-CoA prosthetic group into its acetyl thioester using the energy from the hydrolysis of ATP. The sequence is that of ACP-SH:acetate ligase (madH) from Malonomonas rubra.